The following is a 215-amino-acid chain: Small ribosomal subunit protein uS3 (215 aa).

The KH type-2 domain maps to 39-107 (VRQYLQKRLA…PVHINIEEIR (69 aa)).

It belongs to the universal ribosomal protein uS3 family. As to quaternary structure, part of the 30S ribosomal subunit. Forms a tight complex with proteins S10 and S14.

In terms of biological role, binds the lower part of the 30S subunit head. Binds mRNA in the 70S ribosome, positioning it for translation. The protein is Small ribosomal subunit protein uS3 of Nitrosomonas eutropha (strain DSM 101675 / C91 / Nm57).